The primary structure comprises 295 residues: uncharacterized protein (295 aa).

This is an uncharacterized protein from Rickettsia prowazekii (strain Madrid E).